We begin with the raw amino-acid sequence, 199 residues long: Regulator of G-protein signaling 16 (199 aa).

Residues Cys-2 and Cys-12 are each lipidated (S-palmitoyl cysteine). An RGS domain is found at Ser-64–Ala-180. Phosphotyrosine occurs at positions 167 and 176.

Interacts with GNAI1 and GNAQ. Interacts with GNAI3, GNAI3 and GNAO1. Post-translationally, palmitoylated on Cys-2 and/or Cys-12. In terms of processing, phosphorylated. Phosphorylation at Tyr-167 by EGFR enhances GTPase accelerating (GAP) activity toward GNAI1. Predominantly found in the retina. Some expression has been found in the liver.

It localises to the membrane. Regulates G protein-coupled receptor signaling cascades. Inhibits signal transduction by increasing the GTPase activity of G protein alpha subunits, thereby driving them into their inactive GDP-bound form. Plays an important role in the phototransduction cascade by regulating the lifetime and effective concentration of activated transducin alpha. May regulate extra and intracellular mitogenic signals. In Rattus norvegicus (Rat), this protein is Regulator of G-protein signaling 16 (Rgs16).